The primary structure comprises 150 residues: Large ribosomal subunit protein bL9 (150 aa).

The protein belongs to the bacterial ribosomal protein bL9 family.

Its function is as follows. Binds to the 23S rRNA. In Lactococcus lactis subsp. cremoris (strain MG1363), this protein is Large ribosomal subunit protein bL9.